The primary structure comprises 306 residues: Putative NylC-analogous protein (306 aa).

The protein belongs to the peptidase S58 family.

This Agromyces sp. (strain KY5R) protein is Putative NylC-analogous protein.